The chain runs to 108 residues: Transcription initiation factor IIA subunit 2 (108 aa).

It belongs to the TFIIA subunit 2 family. In terms of assembly, TFIIA is a heterodimer of the large unprocessed subunit 1 and a small subunit gamma. It was originally believed to be a heterotrimer of an alpha, a beta and a gamma subunit. Interacts with NCOA6 general coactivator. TFIIA forms a complex with TBP.

It is found in the nucleus. In terms of biological role, TFIIA is a component of the transcription machinery of RNA polymerase II and plays an important role in transcriptional activation. TFIIA in a complex with TBP mediates transcriptional activity. This is Transcription initiation factor IIA subunit 2 (gtf2a2) from Oncorhynchus mykiss (Rainbow trout).